The primary structure comprises 88 residues: Large ribosomal subunit protein eL31 (88 aa).

It belongs to the eukaryotic ribosomal protein eL31 family.

This Saccharolobus islandicus (strain Y.N.15.51 / Yellowstone #2) (Sulfolobus islandicus) protein is Large ribosomal subunit protein eL31.